Consider the following 433-residue polypeptide: Glutamyl-tRNA reductase (433 aa).

Residues 49 to 52 (TCNR), S114, 119 to 121 (EPQ), and Q125 each bind substrate. The active-site Nucleophile is the C50. An NADP(+)-binding site is contributed by 201–206 (GAGETI).

It belongs to the glutamyl-tRNA reductase family. Homodimer.

It catalyses the reaction (S)-4-amino-5-oxopentanoate + tRNA(Glu) + NADP(+) = L-glutamyl-tRNA(Glu) + NADPH + H(+). It functions in the pathway porphyrin-containing compound metabolism; protoporphyrin-IX biosynthesis; 5-aminolevulinate from L-glutamyl-tRNA(Glu): step 1/2. Catalyzes the NADPH-dependent reduction of glutamyl-tRNA(Glu) to glutamate 1-semialdehyde (GSA). The sequence is that of Glutamyl-tRNA reductase from Histophilus somni (strain 2336) (Haemophilus somnus).